Reading from the N-terminus, the 853-residue chain is uncharacterized protein (853 aa).

Residues M1–K11 show a composition bias toward basic residues. Disordered stretches follow at residues M1–V448, I485–N621, and E635–E658. Residues I20–G37 are compositionally biased toward acidic residues. Over residues N42–K55 the composition is skewed to basic residues. Acidic residues predominate over residues E60–E74. Positions G75–K87 are enriched in basic and acidic residues. The segment covering K88–H107 has biased composition (basic residues). Positions E112 to E121 are enriched in acidic residues. Over residues R124–N139 the composition is skewed to basic residues. Acidic residues-rich tracts occupy residues E143 to V166 and D179 to Q197. The segment covering D216–R228 has biased composition (basic residues). Acidic residues-rich tracts occupy residues D232–N260 and K268–K286. Composition is skewed to basic and acidic residues over residues Q287 to Y361, S370 to Y400, and R411 to S425. Low complexity-rich tracts occupy residues S426–N447, N510–S613, and N636–K652.

This is an uncharacterized protein from Dictyostelium discoideum (Social amoeba).